A 491-amino-acid polypeptide reads, in one-letter code: Protein nucleotidyltransferase YdiU (491 aa).

The ATP site is built by glycine 94, glycine 96, arginine 97, lysine 117, aspartate 129, glycine 130, arginine 180, and arginine 187. Aspartate 256 serves as the catalytic Proton acceptor. The Mg(2+) site is built by asparagine 257 and aspartate 266. Aspartate 266 is a binding site for ATP.

This sequence belongs to the SELO family. The cofactor is Mg(2+). Requires Mn(2+) as cofactor.

It catalyses the reaction L-seryl-[protein] + ATP = 3-O-(5'-adenylyl)-L-seryl-[protein] + diphosphate. The enzyme catalyses L-threonyl-[protein] + ATP = 3-O-(5'-adenylyl)-L-threonyl-[protein] + diphosphate. The catalysed reaction is L-tyrosyl-[protein] + ATP = O-(5'-adenylyl)-L-tyrosyl-[protein] + diphosphate. It carries out the reaction L-histidyl-[protein] + UTP = N(tele)-(5'-uridylyl)-L-histidyl-[protein] + diphosphate. It catalyses the reaction L-seryl-[protein] + UTP = O-(5'-uridylyl)-L-seryl-[protein] + diphosphate. The enzyme catalyses L-tyrosyl-[protein] + UTP = O-(5'-uridylyl)-L-tyrosyl-[protein] + diphosphate. Its function is as follows. Nucleotidyltransferase involved in the post-translational modification of proteins. It can catalyze the addition of adenosine monophosphate (AMP) or uridine monophosphate (UMP) to a protein, resulting in modifications known as AMPylation and UMPylation. This is Protein nucleotidyltransferase YdiU from Clostridium botulinum (strain ATCC 19397 / Type A).